A 465-amino-acid chain; its full sequence is UDP-N-acetylmuramate--L-alanine ligase (465 aa).

Position 112–118 (112–118) interacts with ATP; sequence GTHGKTT.

Belongs to the MurCDEF family.

It localises to the cytoplasm. The catalysed reaction is UDP-N-acetyl-alpha-D-muramate + L-alanine + ATP = UDP-N-acetyl-alpha-D-muramoyl-L-alanine + ADP + phosphate + H(+). Its pathway is cell wall biogenesis; peptidoglycan biosynthesis. Functionally, cell wall formation. This chain is UDP-N-acetylmuramate--L-alanine ligase, found in Burkholderia lata (strain ATCC 17760 / DSM 23089 / LMG 22485 / NCIMB 9086 / R18194 / 383).